A 215-amino-acid polypeptide reads, in one-letter code: Proteasome subunit beta inpE (215 aa).

The protein belongs to the peptidase T1B family.

It localises to the cytoplasm. The protein localises to the nucleus. The catalysed reaction is Cleavage of peptide bonds with very broad specificity.. Functionally, proteasome subunit beta type-6; part of the inp gene cluster that mediates the biosynthesis of fellutamide B, a mycotoxin that acts as a proteasome inhibitor. In the first step of fellutabmide B biosynthesis inpC activates 3-hydroxydodecanoic acid to generate 3-hydroxydodecanoyl-AMP that is then loaded onto the T0 domain of inpB. The 3-hydroxydodecanoyl-S-phosphopantetheinyl-T0 is sequentially extended with L-Asn and L-Gln by the two CAT modules of inpB. The linear lipodipeptide from inpB is then transferred onto inpA for the addition of the third amino acid, L-Leu. Reductive releasing of the lipotripeptide by the TE domain of inpA produces (2S)-fellutamide B. InpF might be involved in the release and transfer of the lipodipeptide from inpB to inpA. The inp cluster-encoded proteasome subunit inpE confers resistance to internally produced fellutamides. The MFS efflux transporter inpD may contribute to fellutamide resistance as well. In Emericella nidulans (strain FGSC A4 / ATCC 38163 / CBS 112.46 / NRRL 194 / M139) (Aspergillus nidulans), this protein is Proteasome subunit beta inpE (inpE).